A 392-amino-acid polypeptide reads, in one-letter code: Chorismate synthase (392 aa).

NADP(+)-binding residues include Arg-40 and Arg-46. FMN contacts are provided by residues 129-131 (RSS), 257-258 (QA), Gly-302, 317-321 (KPIAT), and Arg-343.

It belongs to the chorismate synthase family. Homotetramer. FMNH2 is required as a cofactor.

It carries out the reaction 5-O-(1-carboxyvinyl)-3-phosphoshikimate = chorismate + phosphate. It functions in the pathway metabolic intermediate biosynthesis; chorismate biosynthesis; chorismate from D-erythrose 4-phosphate and phosphoenolpyruvate: step 7/7. Its function is as follows. Catalyzes the anti-1,4-elimination of the C-3 phosphate and the C-6 proR hydrogen from 5-enolpyruvylshikimate-3-phosphate (EPSP) to yield chorismate, which is the branch point compound that serves as the starting substrate for the three terminal pathways of aromatic amino acid biosynthesis. This reaction introduces a second double bond into the aromatic ring system. The polypeptide is Chorismate synthase (Chloroherpeton thalassium (strain ATCC 35110 / GB-78)).